A 72-amino-acid polypeptide reads, in one-letter code: Large ribosomal subunit protein uL29 (72 aa).

Belongs to the universal ribosomal protein uL29 family.

The protein is Large ribosomal subunit protein uL29 of Prochlorococcus marinus (strain MIT 9312).